A 396-amino-acid polypeptide reads, in one-letter code: Phosphoglycerate kinase (396 aa).

Residues 22–24 (DLN), Arg37, 60–63 (HFGR), Arg118, and Arg151 each bind substrate. ATP-binding positions include Lys201, Glu323, and 353-356 (GGDT).

This sequence belongs to the phosphoglycerate kinase family. Monomer.

Its subcellular location is the cytoplasm. It carries out the reaction (2R)-3-phosphoglycerate + ATP = (2R)-3-phospho-glyceroyl phosphate + ADP. It participates in carbohydrate degradation; glycolysis; pyruvate from D-glyceraldehyde 3-phosphate: step 2/5. The polypeptide is Phosphoglycerate kinase (Azorhizobium caulinodans (strain ATCC 43989 / DSM 5975 / JCM 20966 / LMG 6465 / NBRC 14845 / NCIMB 13405 / ORS 571)).